Reading from the N-terminus, the 347-residue chain is MPENIAFLTNSTDLGHVGRALGSSARPAWAIAVLASVLIFTTVVDVLGNLLVIISVFRNRKLRNAGNVFVVSLAFADLVVAFYPYPLVLYAIFHDGWSLGETQCKISGFLMGLSVIGSVFNITGIAINRYCYICHSFAYGRLYSFRNTLLLVALIWALTVLAILPNFFVGSLSYDPRVYSCTFTQTASSSYTVVVVVVHFLVPIAVVTFCYLRIWVLVIQVRRKVKSEERSRVRPSDLRNFVTMFVVFVLFAICWAPLNLIGLVVAINPEVMAPRVPEWLFVVSYFMAYFNSCLNAIIYGLLNRNFRKEYVRIMTAVWIPRRFVTETSRAATDGMRSKPSPAINNNE.

Residues 1-36 (MPENIAFLTNSTDLGHVGRALGSSARPAWAIAVLAS) are Extracellular-facing. N-linked (GlcNAc...) asparagine glycosylation is present at N10. The chain crosses the membrane as a helical span at residues 37 to 57 (VLIFTTVVDVLGNLLVIISVF). Residues 58–72 (RNRKLRNAGNVFVVS) lie on the Cytoplasmic side of the membrane. The chain crosses the membrane as a helical span at residues 73–93 (LAFADLVVAFYPYPLVLYAIF). Topologically, residues 94-105 (HDGWSLGETQCK) are extracellular. C104 and C181 are oxidised to a cystine. The chain crosses the membrane as a helical span at residues 106 to 126 (ISGFLMGLSVIGSVFNITGIA). Topologically, residues 127–148 (INRYCYICHSFAYGRLYSFRNT) are cytoplasmic. The helical transmembrane segment at 149–169 (LLLVALIWALTVLAILPNFFV) threads the bilayer. The Extracellular segment spans residues 170 to 191 (GSLSYDPRVYSCTFTQTASSSY). Residues 192-212 (TVVVVVVHFLVPIAVVTFCYL) form a helical membrane-spanning segment. Over 213–244 (RIWVLVIQVRRKVKSEERSRVRPSDLRNFVTM) the chain is Cytoplasmic. The chain crosses the membrane as a helical span at residues 245–265 (FVVFVLFAICWAPLNLIGLVV). Residues 266-278 (AINPEVMAPRVPE) are Extracellular-facing. A helical transmembrane segment spans residues 279-299 (WLFVVSYFMAYFNSCLNAIIY). Over 300–347 (GLLNRNFRKEYVRIMTAVWIPRRFVTETSRAATDGMRSKPSPAINNNE) the chain is Cytoplasmic.

The protein belongs to the G-protein coupled receptor 1 family.

It is found in the cell membrane. High affinity receptor for melatonin. The activity of this receptor is mediated by pertussis toxin sensitive G proteins that inhibits adenylate cyclase activity. The polypeptide is Melatonin receptor type 1B-B (mtnr1bb) (Danio rerio (Zebrafish)).